Reading from the N-terminus, the 313-residue chain is Urease accessory protein UreD (313 aa).

A disordered region spans residues 1 to 30 (MTDLSFPGQAASPGEGAGQTPSGGSGHRFD). A compositionally biased stretch (gly residues) spans 15–26 (EGAGQTPSGGSG).

Belongs to the UreD family. As to quaternary structure, ureD, UreF and UreG form a complex that acts as a GTP-hydrolysis-dependent molecular chaperone, activating the urease apoprotein by helping to assemble the nickel containing metallocenter of UreC. The UreE protein probably delivers the nickel.

The protein localises to the cytoplasm. In terms of biological role, required for maturation of urease via the functional incorporation of the urease nickel metallocenter. The polypeptide is Urease accessory protein UreD (Chromohalobacter salexigens (strain ATCC BAA-138 / DSM 3043 / CIP 106854 / NCIMB 13768 / 1H11)).